We begin with the raw amino-acid sequence, 337 residues long: Anthranilate phosphoribosyltransferase (337 aa).

5-phospho-alpha-D-ribose 1-diphosphate contacts are provided by residues G81, 84–85 (GD), S89, 91–94 (NVST), 109–117 (KHGNRAATS), and A121. Residue G81 participates in anthranilate binding. S93 serves as a coordination point for Mg(2+). N112 serves as a coordination point for anthranilate. R167 lines the anthranilate pocket. Mg(2+)-binding residues include D226 and E227.

This sequence belongs to the anthranilate phosphoribosyltransferase family. Homodimer. The cofactor is Mg(2+).

The enzyme catalyses N-(5-phospho-beta-D-ribosyl)anthranilate + diphosphate = 5-phospho-alpha-D-ribose 1-diphosphate + anthranilate. Its pathway is amino-acid biosynthesis; L-tryptophan biosynthesis; L-tryptophan from chorismate: step 2/5. Its function is as follows. Catalyzes the transfer of the phosphoribosyl group of 5-phosphorylribose-1-pyrophosphate (PRPP) to anthranilate to yield N-(5'-phosphoribosyl)-anthranilate (PRA). The polypeptide is Anthranilate phosphoribosyltransferase (Methylorubrum extorquens (strain PA1) (Methylobacterium extorquens)).